A 319-amino-acid chain; its full sequence is Beta-ketoacyl-[acyl-carrier-protein] synthase III (319 aa).

Catalysis depends on residues cysteine 115 and histidine 246. The ACP-binding stretch occupies residues 247 to 251 (QANLR). Residue asparagine 276 is part of the active site.

The protein belongs to the thiolase-like superfamily. FabH family. Homodimer.

Its subcellular location is the cytoplasm. It carries out the reaction malonyl-[ACP] + acetyl-CoA + H(+) = 3-oxobutanoyl-[ACP] + CO2 + CoA. The protein operates within lipid metabolism; fatty acid biosynthesis. Its function is as follows. Catalyzes the condensation reaction of fatty acid synthesis by the addition to an acyl acceptor of two carbons from malonyl-ACP. Catalyzes the first condensation reaction which initiates fatty acid synthesis and may therefore play a role in governing the total rate of fatty acid production. Possesses both acetoacetyl-ACP synthase and acetyl transacylase activities. Its substrate specificity determines the biosynthesis of branched-chain and/or straight-chain of fatty acids. This Coxiella burnetii (strain Dugway 5J108-111) protein is Beta-ketoacyl-[acyl-carrier-protein] synthase III.